Here is a 227-residue protein sequence, read N- to C-terminus: 2,3-bisphosphoglycerate-dependent phosphoglycerate mutase (227 aa).

Substrate is bound by residues R7–N14, T20–G21, R59, E86–Y89, K97, R113–R114, and G182–N183. H8 (tele-phosphohistidine intermediate) is an active-site residue. Catalysis depends on E86, which acts as the Proton donor/acceptor.

It belongs to the phosphoglycerate mutase family. BPG-dependent PGAM subfamily. Homodimer.

The enzyme catalyses (2R)-2-phosphoglycerate = (2R)-3-phosphoglycerate. The protein operates within carbohydrate degradation; glycolysis; pyruvate from D-glyceraldehyde 3-phosphate: step 3/5. In terms of biological role, catalyzes the interconversion of 2-phosphoglycerate and 3-phosphoglycerate. This is 2,3-bisphosphoglycerate-dependent phosphoglycerate mutase from Mannheimia succiniciproducens (strain KCTC 0769BP / MBEL55E).